An 868-amino-acid polypeptide reads, in one-letter code: Ionotropic receptor 93a (868 aa).

An N-terminal signal peptide occupies residues Met1–Ala28. Residues Asn29–Arg565 are Extracellular-facing. Residues Asn38, Asn205, Asn294, Asn305, Asn432, Asn475, Asn499, and Asn543 are each glycosylated (N-linked (GlcNAc...) asparagine). Residues Ile566–Leu586 form a helical membrane-spanning segment. The Cytoplasmic segment spans residues Leu587–Gly642. A helical membrane pass occupies residues Phe643 to Leu663. At Thr664–Gly832 the chain is on the extracellular side. An N-linked (GlcNAc...) asparagine glycan is attached at Asn691. Residues Cys833–Trp853 form a helical membrane-spanning segment. Over Tyr854–Asn868 the chain is Cytoplasmic.

This sequence belongs to the glutamate-gated ion channel (TC 1.A.10.1) family. As to expression, in the antenna, detected in sacculus neurons which innervate the first and second chambers (at protein level). Expressed in multiple cells of the larval dorsal organ ganglion, including the dorsal organ cool cells where it is predominately localized to the dendritic bulbs (at protein level).

It is found in the cell membrane. In terms of biological role, integral part of various neural sensory systems in the antenna that provide the neural basis for the response to environmental changes in temperature (thermosensation) and humidity (hygrosensation). Together with Ir21a and Ir25a, mediates the response of the larval dorsal organ cool cells, a trio of cool-responsive neurons, to cooling and is required for cool avoidance behavior. Together with Ir25a and Ir40a, mediates the response of the hydrosensory sacculus neurons to changes in relative humidity, and is required for dry detection and humidiy preference behavior. This chain is Ionotropic receptor 93a, found in Drosophila melanogaster (Fruit fly).